The chain runs to 93 residues: Protein S100-A8 (93 aa).

2 consecutive EF-hand domains span residues 12-47 (IIDV…QYIR) and 46-81 (IRKK…MGVA). The Zn(2+) site is built by His-17 and His-27. A Ca(2+)-binding site is contributed by Asp-33. Position 42 is an S-nitrosocysteine (Cys-42). Ca(2+) contacts are provided by Asp-59, Asn-61, Asp-63, and Glu-70. Residues His-83 and His-87 each coordinate Zn(2+).

It belongs to the S-100 family. Homodimer. Preferentially exists as a heterodimer or heterotetramer with S100A9 known as calprotectin (S100A8/A9). S100A8 interacts with AGER, ATP2A2 and with the heterodimeric complex formed by TLR4 and LY96. Interacts with GAPDH. Calprotectin (S100A8/9) interacts with CEACAM3 and tubulin filaments in a calcium-dependent manner. Heterotetrameric calprotectin (S100A8/A9) interacts with ANXA6 and associates with tubulin filaments in activated monocytes. S100A8 and calprotectin (S100A8/9) interact with NCF2/P67PHOX, RAC1 and RAC2. Calprotectin (S100A8/9) interacts with CYBA and CYBB. Calprotectin (S100A8/9) interacts with NOS2 to form the iNOS-S100A8/A9 transnitrosylase complex; induced by LDL(ox). Calprotectin (S100A8/9) interacts with CD69. In terms of tissue distribution, calprotectin (S100A8/9) is predominantly expressed in myeloid cells. Except for inflammatory conditions, the expression is restricted to a specific stage of myeloid differentiation since both proteins are expressed in circulating neutrophils and monocytes but are absent in normal tissue macrophages and lymphocytes. Under chronic inflammatory conditions, such as psoriasis and malignant disorders, also expressed in the epidermis. Found in high concentrations at local sites of inflammation or in the serum of patients with inflammatory diseases such as rheumatoid, cystic fibrosis, inflammatory bowel disease, Crohn's disease, giant cell arteritis, cystic fibrosis, Sjogren's syndrome, systemic lupus erythematosus, and progressive systemic sclerosis. Involved in the formation and deposition of amyloids in the aging prostate known as corpora amylacea inclusions. Strongly up-regulated in many tumors, including gastric, esophageal, colon, pancreatic, bladder, ovarian, thyroid, breast and skin cancers.

It is found in the secreted. The protein resides in the cytoplasm. It localises to the cytoskeleton. Its subcellular location is the cell membrane. Calprotectin (S100A8/A9) activity on TLR4 signaling is inhibited by paquinimod. S100A8 is a calcium- and zinc-binding protein which plays a prominent role in the regulation of inflammatory processes and immune response. It can induce neutrophil chemotaxis and adhesion. Predominantly found as calprotectin (S100A8/A9) which has a wide plethora of intra- and extracellular functions. The intracellular functions include: facilitating leukocyte arachidonic acid trafficking and metabolism, modulation of the tubulin-dependent cytoskeleton during migration of phagocytes and activation of the neutrophilic NADPH-oxidase. Also participates in regulatory T-cell differentiation together with CD69. Activates NADPH-oxidase by facilitating the enzyme complex assembly at the cell membrane, transferring arachidonic acid, an essential cofactor, to the enzyme complex and S100A8 contributes to the enzyme assembly by directly binding to NCF2/P67PHOX. The extracellular functions involve pro-inflammatory, antimicrobial, oxidant-scavenging and apoptosis-inducing activities. Its pro-inflammatory activity includes recruitment of leukocytes, promotion of cytokine and chemokine production, and regulation of leukocyte adhesion and migration. Acts as an alarmin or a danger associated molecular pattern (DAMP) molecule and stimulates innate immune cells via binding to pattern recognition receptors such as Toll-like receptor 4 (TLR4) and receptor for advanced glycation endproducts (AGER). Binding to TLR4 and AGER activates the MAP-kinase and NF-kappa-B signaling pathways resulting in the amplification of the pro-inflammatory cascade. Has antimicrobial activity towards bacteria and fungi and exerts its antimicrobial activity probably via chelation of Zn(2+) which is essential for microbial growth. Can induce cell death via autophagy and apoptosis and this occurs through the cross-talk of mitochondria and lysosomes via reactive oxygen species (ROS) and the process involves BNIP3. Can regulate neutrophil number and apoptosis by an anti-apoptotic effect; regulates cell survival via ITGAM/ITGB and TLR4 and a signaling mechanism involving MEK-ERK. Its role as an oxidant scavenger has a protective role in preventing exaggerated tissue damage by scavenging oxidants. Can act as a potent amplifier of inflammation in autoimmunity as well as in cancer development and tumor spread. The iNOS-S100A8/A9 transnitrosylase complex directs selective inflammatory stimulus-dependent S-nitrosylation of GAPDH and probably multiple targets such as ANXA5, EZR, MSN and VIM by recognizing a [IL]-x-C-x-x-[DE] motif; S100A8 seems to contribute to S-nitrosylation site selectivity. In terms of biological role, (Microbial infection) Upon infection by human coronavirus SARS-CoV-2, may induce expansion of aberrant immature neutrophils in a TLR4-dependent manner. This Homo sapiens (Human) protein is Protein S100-A8.